We begin with the raw amino-acid sequence, 404 residues long: Phosphoglycerate kinase (404 aa).

Substrate contacts are provided by residues 26 to 28 (DFN), arginine 41, 64 to 67 (HLGR), arginine 124, and arginine 161. ATP-binding positions include lysine 212, glycine 301, glutamate 332, and 359–362 (GGDS).

This sequence belongs to the phosphoglycerate kinase family. As to quaternary structure, monomer.

Its subcellular location is the cytoplasm. It catalyses the reaction (2R)-3-phosphoglycerate + ATP = (2R)-3-phospho-glyceroyl phosphate + ADP. Its pathway is carbohydrate degradation; glycolysis; pyruvate from D-glyceraldehyde 3-phosphate: step 2/5. This Mesomycoplasma hyopneumoniae (strain 232) (Mycoplasma hyopneumoniae) protein is Phosphoglycerate kinase.